The chain runs to 243 residues: NADH-ubiquinone oxidoreductase chain 6 (243 aa).

Helical transmembrane passes span 16–36 (ISSVLDIISILAIFCGISVIV), 41–61 (IISVLFLIGLFASVSSYLILL), 69–89 (AYLIVYIGAISILFLFILMLI), 104–124 (IPLTIILGISLSYSLFQLLPY), and 201–221 (IWLFLASFILLLAMVGSIVII).

This sequence belongs to the complex I subunit 6 family.

The protein resides in the mitochondrion membrane. It carries out the reaction a ubiquinone + NADH + 5 H(+)(in) = a ubiquinol + NAD(+) + 4 H(+)(out). Core subunit of the mitochondrial membrane respiratory chain NADH dehydrogenase (Complex I) that is believed to belong to the minimal assembly required for catalysis. Complex I functions in the transfer of electrons from NADH to the respiratory chain. The immediate electron acceptor for the enzyme is believed to be ubiquinone. The sequence is that of NADH-ubiquinone oxidoreductase chain 6 (ndh-6) from Neurospora crassa (strain ATCC 24698 / 74-OR23-1A / CBS 708.71 / DSM 1257 / FGSC 987).